The following is a 175-amino-acid chain: uncharacterized protein (175 aa).

The helical transmembrane segment at 143-166 (TCFLFCAFVTSIFIETDYSIFFLL) threads the bilayer.

The protein resides in the membrane. This is an uncharacterized protein from Saccharomyces cerevisiae (strain ATCC 204508 / S288c) (Baker's yeast).